The sequence spans 308 residues: Aliphatic nitrilase (308 aa).

Positions 4 to 270 constitute a CN hydrolase domain; it reads FRAAVVQAAP…ETILTADLDT (267 aa). The Proton acceptor role is filled by E44. Residue K130 is part of the active site. The active-site Nucleophile is C164.

Belongs to the carbon-nitrogen hydrolase superfamily. Nitrilase family.

The catalysed reaction is a nitrile + 2 H2O = a carboxylate + NH4(+). In terms of biological role, nitrilase that hydrolyzes preferentially phenylacetonitrile, but not (R,S)-mandelonitrile. Also acts on dinitriles like phenylenediacetonitriles (PDAs) 1,2-PDA, 1,3-PDA, and 1,4-PDA, and cyanophenyl acetonitriles (CPAs) 2-CPA and 4-CPA, but with lower activities. The sequence is that of Aliphatic nitrilase (nit) from Sinorhizobium fredii (strain HH103).